The following is a 223-amino-acid chain: Uracil-DNA glycosylase (223 aa).

The active-site Proton acceptor is D67.

The protein belongs to the uracil-DNA glycosylase (UDG) superfamily. UNG family.

It localises to the cytoplasm. The catalysed reaction is Hydrolyzes single-stranded DNA or mismatched double-stranded DNA and polynucleotides, releasing free uracil.. In terms of biological role, excises uracil residues from the DNA which can arise as a result of misincorporation of dUMP residues by DNA polymerase or due to deamination of cytosine. In Borreliella burgdorferi (strain ZS7) (Borrelia burgdorferi), this protein is Uracil-DNA glycosylase.